The sequence spans 124 residues: MPAKQTSGKGAKKAGKAKGRPAGASKTRRRKRKESYGIYIYKVLKQVHPDTGISSKAMSIMNSFVNDVFERIAGEASRLAHYNKKSTISSREVQTAVRLLLPGELAKHAVSEGTKAVTKYTTSK.

Residues 1–32 are disordered; sequence MPAKQTSGKGAKKAGKAKGRPAGASKTRRRKR. Positions 10 to 19 are enriched in basic residues; it reads GAKKAGKAKG. O-linked (GlcNAc) serine glycosylation occurs at S111. K119 participates in a covalent cross-link: Glycyl lysine isopeptide (Lys-Gly) (interchain with G-Cter in ubiquitin).

Belongs to the histone H2B family. The nucleosome is a histone octamer containing two molecules each of H2A, H2B, H3 and H4 assembled in one H3-H4 heterotetramer and two H2A-H2B heterodimers. The octamer wraps approximately 147 bp of DNA. Monoubiquitination of Lys-119 gives a specific tag for epigenetic transcriptional activation and is also prerequisite for histone H3 'Lys-4' and 'Lys-79' methylation. Post-translationally, glcNAcylation at Ser-111 promotes monoubiquitination of Lys-119. It fluctuates in response to extracellular glucose, and associates with transcribed genes.

The protein localises to the nucleus. It is found in the chromosome. Functionally, core component of nucleosome. Nucleosomes wrap and compact DNA into chromatin, limiting DNA accessibility to the cellular machineries which require DNA as a template. Histones thereby play a central role in transcription regulation, DNA repair, DNA replication and chromosomal stability. DNA accessibility is regulated via a complex set of post-translational modifications of histones, also called histone code, and nucleosome remodeling. This chain is Late histone H2B.2.1, found in Psammechinus miliaris (Green sea urchin).